Consider the following 170-residue polypeptide: tRNA-splicing endonuclease (170 aa).

Catalysis depends on residues Tyr110, His116, and Lys147.

It belongs to the tRNA-intron endonuclease family. Archaeal short subfamily. In terms of assembly, homotetramer; although the tetramer contains four active sites, only two participate in the cleavage. Therefore, it should be considered as a dimer of dimers.

It catalyses the reaction pretRNA = a 3'-half-tRNA molecule with a 5'-OH end + a 5'-half-tRNA molecule with a 2',3'-cyclic phosphate end + an intron with a 2',3'-cyclic phosphate and a 5'-hydroxyl terminus.. In terms of biological role, endonuclease that removes tRNA introns. Cleaves pre-tRNA at the 5'- and 3'-splice sites to release the intron. The products are an intron and two tRNA half-molecules bearing 2',3' cyclic phosphate and 5'-OH termini. Recognizes a pseudosymmetric substrate in which 2 bulged loops of 3 bases are separated by a stem of 4 bp. This is tRNA-splicing endonuclease from Pyrococcus furiosus (strain ATCC 43587 / DSM 3638 / JCM 8422 / Vc1).